The following is a 141-amino-acid chain: Transmembrane protein 216 (141 aa).

4 consecutive transmembrane segments (helical) span residues 15-35, 49-69, 82-102, and 115-135; these read ILFF…LLIF, LVLD…RLFF, LGIS…YLLL, and SILL…LATF.

In terms of assembly, part of the tectonic-like complex (also named B9 complex). Interacts with TMEM107.

The protein localises to the membrane. The protein resides in the cytoplasm. It is found in the cytoskeleton. Its subcellular location is the cilium basal body. Functionally, part of the tectonic-like complex which is required for tissue-specific ciliogenesis and may regulate ciliary membrane composition. This Rattus norvegicus (Rat) protein is Transmembrane protein 216 (Tmem216).